The sequence spans 423 residues: Adenylosuccinate synthetase (423 aa).

GTP is bound by residues 12–18 (GDEGKGK) and 40–42 (GHT). Asp-13 acts as the Proton acceptor in catalysis. 2 residues coordinate Mg(2+): Asp-13 and Gly-40. IMP-binding positions include 13–16 (DEGK), 38–41 (NAGH), Thr-128, Arg-142, Gln-223, Thr-238, and Arg-302. The active-site Proton donor is the His-41. 298–304 (TTTGRPR) contacts substrate. Residues Arg-304, 330-332 (RLD), and 412-414 (CIG) each bind GTP.

The protein belongs to the adenylosuccinate synthetase family. As to quaternary structure, homodimer. It depends on Mg(2+) as a cofactor.

Its subcellular location is the cytoplasm. The catalysed reaction is IMP + L-aspartate + GTP = N(6)-(1,2-dicarboxyethyl)-AMP + GDP + phosphate + 2 H(+). Its pathway is purine metabolism; AMP biosynthesis via de novo pathway; AMP from IMP: step 1/2. Functionally, plays an important role in the de novo pathway of purine nucleotide biosynthesis. Catalyzes the first committed step in the biosynthesis of AMP from IMP. This chain is Adenylosuccinate synthetase, found in Dehalococcoides mccartyi (strain ATCC BAA-2100 / JCM 16839 / KCTC 5957 / BAV1).